The primary structure comprises 860 residues: Leucine--tRNA ligase (860 aa).

A 'HIGH' region motif is present at residues 42–52 (PYPSGRLHMGH). The 'KMSKS' region motif lies at 619–623 (KMSKS). Lys622 is a binding site for ATP.

Belongs to the class-I aminoacyl-tRNA synthetase family.

It localises to the cytoplasm. The catalysed reaction is tRNA(Leu) + L-leucine + ATP = L-leucyl-tRNA(Leu) + AMP + diphosphate. This Salmonella enteritidis PT4 (strain P125109) protein is Leucine--tRNA ligase.